We begin with the raw amino-acid sequence, 332 residues long: Glycerol-3-phosphate dehydrogenase [NAD(P)+] (332 aa).

Tryptophan 13, lysine 34, and lysine 108 together coordinate NADPH. Residues lysine 108, glycine 136, and serine 138 each coordinate sn-glycerol 3-phosphate. Alanine 140 serves as a coordination point for NADPH. Residues lysine 191, aspartate 244, serine 254, arginine 255, and asparagine 256 each contribute to the sn-glycerol 3-phosphate site. Lysine 191 (proton acceptor) is an active-site residue. Arginine 255 contributes to the NADPH binding site. 2 residues coordinate NADPH: valine 279 and glutamate 281.

Belongs to the NAD-dependent glycerol-3-phosphate dehydrogenase family.

The protein resides in the cytoplasm. The catalysed reaction is sn-glycerol 3-phosphate + NAD(+) = dihydroxyacetone phosphate + NADH + H(+). It carries out the reaction sn-glycerol 3-phosphate + NADP(+) = dihydroxyacetone phosphate + NADPH + H(+). Its pathway is membrane lipid metabolism; glycerophospholipid metabolism. Catalyzes the reduction of the glycolytic intermediate dihydroxyacetone phosphate (DHAP) to sn-glycerol 3-phosphate (G3P), the key precursor for phospholipid synthesis. This Francisella tularensis subsp. novicida (strain U112) protein is Glycerol-3-phosphate dehydrogenase [NAD(P)+].